Reading from the N-terminus, the 1369-residue chain is Rho-associated protein kinase 1 (1369 aa).

The residue at position 2 (Ser2) is an N-acetylserine. One can recognise a Protein kinase domain in the interval 76–338 (YEVVKVIGRG…VEEIKRHLFF (263 aa)). Residues 82-90 (IGRGAFGEV) and Lys105 each bind ATP. Asp198 functions as the Proton acceptor in the catalytic mechanism. Residues 341-409 (DQWAWETLRD…YSNRRYLPSA (69 aa)) form the AGC-kinase C-terminal domain. Positions 368–727 (FDDLEEDKGD…KKLKEEREAR (360 aa)) are interaction with FHOD1. Residues 422 to 692 (KNVQESLQKT…RLEQEVNEHK (271 aa)) adopt a coiled-coil conformation. In terms of domain architecture, REM-1 spans 479–556 (SAVSQIEKEK…LEEANDLLRT (78 aa)). Positions 707 to 946 (EAKSVAMCEM…TVSRLEEANN (240 aa)) are SHROOM3 binding. The RhoBD domain maps to 949–1015 (TKDIELLRKE…LAEIMNRKDF (67 aa)). Residues 998 to 1010 (LKTQAVNKLAEIM) are RHOA binding. Positions 1011–1102 (NRKDFKIDRK…KLLDLSDSTS (92 aa)) form a coiled coil. Phosphoserine occurs at positions 1105 and 1108. The auto-inhibitory stretch occupies residues 1115 to 1369 (NLPVGSACIP…VVKNTSGKTS (255 aa)). In terms of domain architecture, PH spans 1133-1332 (SSRIEGWLSV…WVTHLVKKIP (200 aa)). The segment at 1243–1298 (GHEFIPTLYHFPANCEACAKPLWHVFKPPPALECRRCHVKSHRDHLDKKEDLIPPC) adopts a Phorbol-ester/DAG-type zinc-finger fold. The residue at position 1343 (Ser1343) is a Phosphoserine.

Belongs to the protein kinase superfamily. AGC Ser/Thr protein kinase family. As to quaternary structure, homodimer. Interacts with GEM, MYLC2B, RHOE, LIMK1, LIMK2, TSG101, CHORDC1, DAPK3, PFN1, PTEN and JIP3. Interacts with FHOD1 in a Src-dependent manner. Interacts with ITGB1BP1 (via N-terminus and PTB domain). Interacts with RHOA (activated by GTP), RHOB, RHOC and PPP1R12A. Interacts with SHROOM3. Requires Mg(2+) as cofactor. Autophosphorylated on serine and threonine residues. Post-translationally, cleaved by caspase-3 during apoptosis. This leads to constitutive activation of the kinase and membrane blebbing. As to expression, highly expressed in brain, spleen, lung, liver, skeletal muscle, kidney and testis.

The protein localises to the cytoplasm. It is found in the cytoskeleton. Its subcellular location is the microtubule organizing center. The protein resides in the centrosome. It localises to the centriole. The protein localises to the golgi apparatus membrane. It is found in the cell projection. Its subcellular location is the bleb. The protein resides in the cell membrane. It localises to the lamellipodium. The protein localises to the ruffle. It carries out the reaction L-seryl-[protein] + ATP = O-phospho-L-seryl-[protein] + ADP + H(+). It catalyses the reaction L-threonyl-[protein] + ATP = O-phospho-L-threonyl-[protein] + ADP + H(+). Activated by RHOA binding. Inhibited by Y-27632. In terms of biological role, protein kinase which is a key regulator of the actin cytoskeleton and cell polarity. Involved in regulation of smooth muscle contraction, actin cytoskeleton organization, stress fiber and focal adhesion formation, neurite retraction, cell adhesion and motility via phosphorylation of DAPK3, GFAP, LIMK1, LIMK2, MYL9/MLC2, TPPP, PFN1 and PPP1R12A. Phosphorylates FHOD1 and acts synergistically with it to promote SRC-dependent non-apoptotic plasma membrane blebbing. Phosphorylates JIP3 and regulates the recruitment of JNK to JIP3 upon UVB-induced stress. Acts as a suppressor of inflammatory cell migration by regulating PTEN phosphorylation and stability. Acts as a negative regulator of VEGF-induced angiogenic endothelial cell activation. Required for centrosome positioning and centrosome-dependent exit from mitosis. Plays a role in terminal erythroid differentiation. Inhibits podocyte motility via regulation of actin cytoskeletal dynamics and phosphorylation of CFL1. Promotes keratinocyte terminal differentiation. Involved in osteoblast compaction through the fibronectin fibrillogenesis cell-mediated matrix assembly process, essential for osteoblast mineralization. May regulate closure of the eyelids and ventral body wall by inducing the assembly of actomyosin bundles. This chain is Rho-associated protein kinase 1 (Rock1), found in Rattus norvegicus (Rat).